The primary structure comprises 365 residues: DNA replication and repair protein RecF (365 aa).

ATP is bound at residue 30–37 (GDNGEGKT).

Belongs to the RecF family.

The protein resides in the cytoplasm. In terms of biological role, the RecF protein is involved in DNA metabolism; it is required for DNA replication and normal SOS inducibility. RecF binds preferentially to single-stranded, linear DNA. It also seems to bind ATP. This is DNA replication and repair protein RecF from Leptospira interrogans serogroup Icterohaemorrhagiae serovar copenhageni (strain Fiocruz L1-130).